We begin with the raw amino-acid sequence, 494 residues long: Catalase (494 aa).

Active-site residues include H65 and N138. A heme-binding site is contributed by Y348.

Belongs to the catalase family. As to quaternary structure, homotetramer. It depends on heme as a cofactor.

It is found in the cytoplasm. The protein resides in the cytosol. The protein localises to the peroxisome matrix. It catalyses the reaction 2 H2O2 = O2 + 2 H2O. In terms of biological role, catalyzes the degradation of hydrogen peroxide (H(2)O(2)) generated by peroxisomal oxidases to water and oxygen, thereby protecting cells from the toxic effects of hydrogen peroxide. In Pisum sativum (Garden pea), this protein is Catalase.